The following is a 382-amino-acid chain: Intermediate transcription factor 3 large subunit (382 aa).

It belongs to the poxviruses A23 family. In terms of assembly, heterodimer of a 45 kDa and a 32 kDa subunit.

Its function is as follows. Acts with RNA polymerase to initiate transcription from intermediate gene promoters. The sequence is that of Intermediate transcription factor 3 large subunit (VITF3L) from Camelus.